A 635-amino-acid chain; its full sequence is Beta-mannosyltransferase 2 (635 aa).

Over 1–6 the chain is Cytoplasmic; that stretch reads MRTRLN. Residues 7-27 traverse the membrane as a helical segment; that stretch reads FLLLCIASVLSVIWIGVLLTW. Residues 28–635 are Extracellular-facing; it reads NDNNLGGISL…EKKEAEKKGK (608 aa). An N-linked (GlcNAc...) asparagine glycan is attached at Asn-484. Positions 512-635 form a coiled coil; the sequence is TRGEAERRRR…EKKEAEKKGK (124 aa). The interval 517-635 is disordered; it reads ERRRRVAEER…EKKEAEKKGK (119 aa).

Belongs to the BMT family.

The protein resides in the membrane. Its function is as follows. Beta-mannosyltransferase involved in cell wall biosynthesis. Initiates the beta-mannosylation of core N-linked glycans. In Komagataella phaffii (strain ATCC 76273 / CBS 7435 / CECT 11047 / NRRL Y-11430 / Wegner 21-1) (Yeast), this protein is Beta-mannosyltransferase 2 (BMT2).